The following is a 342-amino-acid chain: S-adenosylmethionine:tRNA ribosyltransferase-isomerase (342 aa).

This sequence belongs to the QueA family. As to quaternary structure, monomer.

The protein localises to the cytoplasm. It catalyses the reaction 7-aminomethyl-7-carbaguanosine(34) in tRNA + S-adenosyl-L-methionine = epoxyqueuosine(34) in tRNA + adenine + L-methionine + 2 H(+). It functions in the pathway tRNA modification; tRNA-queuosine biosynthesis. Its function is as follows. Transfers and isomerizes the ribose moiety from AdoMet to the 7-aminomethyl group of 7-deazaguanine (preQ1-tRNA) to give epoxyqueuosine (oQ-tRNA). The sequence is that of S-adenosylmethionine:tRNA ribosyltransferase-isomerase from Listeria monocytogenes serovar 1/2a (strain ATCC BAA-679 / EGD-e).